Reading from the N-terminus, the 279-residue chain is Protein ABIL4 (279 aa).

Disordered stretches follow at residues 192-211 (VHNNINNRTPNKRSNSPMRF) and 219-241 (LLKRSSSPSQPKKPPLALPEPQR). Over residues 194–208 (NNINNRTPNKRSNSP) the composition is skewed to polar residues. Positions 219–228 (LLKRSSSPSQ) are enriched in low complexity.

This sequence belongs to the ABI family. Binds SCAR.

It is found in the cytoplasm. The protein localises to the cytoskeleton. Involved in regulation of actin and microtubule organization. Part of a WAVE complex that activates the Arp2/3 complex. This is Protein ABIL4 (ABIL4) from Arabidopsis thaliana (Mouse-ear cress).